The chain runs to 295 residues: MNVKEEIDIVIITGMSGAGKTVAVQSLEDLGYFCVDNLPPALIPKFIELIESSSGKMNKLALVIDLRGQTFFDQLFESIDLLDQSSLSKYNIQILFLDAKDAKLVQRYKETRRSHPLAKHGLPLDGIKKERELLEDLKGRAQQIIDTTDLKPIQLREKIIQRFSCEEHHSFTVNMMSFGFKYGIPIDADLVFDVRFLPNPHYVDHLRPKTGLEGEVSSYVLKWTETQQFIEKLEDLLSFMLPQYKREGKSQVVIGIGCTGGKHRSVTLAEHFAKVFANEYMMHVSHRDVEKGKER.

An ATP-binding site is contributed by 14 to 21; it reads GMSGAGKT. 65–68 is a GTP binding site; it reads DLRG.

This sequence belongs to the RapZ-like family.

Its function is as follows. Displays ATPase and GTPase activities. The protein is Nucleotide-binding protein BH3569 of Halalkalibacterium halodurans (strain ATCC BAA-125 / DSM 18197 / FERM 7344 / JCM 9153 / C-125) (Bacillus halodurans).